Reading from the N-terminus, the 351-residue chain is uncharacterized protein (351 aa).

Aspartate 215, aspartate 226, histidine 290, glutamate 319, and glutamate 333 together coordinate Mn(2+).

The protein belongs to the peptidase M24B family. Requires Mn(2+) as cofactor.

This is an uncharacterized protein from Staphylococcus aureus (strain USA300).